Consider the following 290-residue polypeptide: Cbb3-type cytochrome c oxidase subunit FixP (290 aa).

The Cytoplasmic portion of the chain corresponds to 1 to 32; sequence MTDHSEFDSVSGKTTTGHEWDGIKELNTPLPR. A helical membrane pass occupies residues 33-53; it reads WWVICFYLTIVWAIGYWIVYP. Topologically, residues 54 to 290 are periplasmic; the sequence is AWPLISSNTT…VYVHSLGGGK (237 aa). 2 Cytochrome c domains span residues 109–198 and 206–287; these read LARA…RSLS and YDAA…HSLG. Heme c is bound by residues cysteine 122, cysteine 125, histidine 126, methionine 173, cysteine 219, cysteine 222, histidine 223, and methionine 264.

Belongs to the CcoP / FixP family. In terms of assembly, component of the cbb3-type cytochrome c oxidase at least composed of FixN, FixO, FixQ and FixP. The cofactor is heme c.

The protein localises to the cell inner membrane. It participates in energy metabolism; oxidative phosphorylation. Its function is as follows. C-type cytochrome. Part of the cbb3-type cytochrome c oxidase complex. FixP subunit is required for transferring electrons from donor cytochrome c via its heme groups to FixO subunit. From there, electrons are shuttled to the catalytic binuclear center of FixN subunit where oxygen reduction takes place. The complex also functions as a proton pump. The sequence is that of Cbb3-type cytochrome c oxidase subunit FixP from Bradyrhizobium diazoefficiens (strain JCM 10833 / BCRC 13528 / IAM 13628 / NBRC 14792 / USDA 110).